A 491-amino-acid chain; its full sequence is UDP-N-acetylmuramate--L-alanine ligase (491 aa).

115–121 (GTHGKTT) is a binding site for ATP.

Belongs to the MurCDEF family.

It is found in the cytoplasm. It carries out the reaction UDP-N-acetyl-alpha-D-muramate + L-alanine + ATP = UDP-N-acetyl-alpha-D-muramoyl-L-alanine + ADP + phosphate + H(+). It functions in the pathway cell wall biogenesis; peptidoglycan biosynthesis. In terms of biological role, cell wall formation. This is UDP-N-acetylmuramate--L-alanine ligase from Parvibaculum lavamentivorans (strain DS-1 / DSM 13023 / NCIMB 13966).